Here is a 24-residue protein sequence, read N- to C-terminus: Brevinin-1SPa (24 aa).

Cysteine 18 and cysteine 24 are oxidised to a cystine.

As to expression, expressed by the skin glands.

It is found in the secreted. In terms of biological role, antimicrobial peptide with activity against Gram-negative and Gram-positive bacteria (MIC=13 uM against E.coli, MIC=3 uM against S.aureus) and fungi (MIC=6 uM against C.albicans). Shows hemolytic activity on human erythrocytes (HC(50)=7 uM). This chain is Brevinin-1SPa, found in Lithobates septentrionalis (Mink frog).